The chain runs to 327 residues: Ran-specific GTPase-activating protein 2 (327 aa).

2 disordered regions span residues 1–96 (MSET…KKED) and 109–205 (GFGV…KQEV). Over residues 24 to 83 (PIDKLDGTPKRPREKDQDEQAEETSDKSEAPNKNDEEKKEEGKKDQEPSHKKIKVDDGKT) the composition is skewed to basic and acidic residues. Thr31 carries the post-translational modification Phosphothreonine. Residues 122 to 133 (ATTSTESLPASD) show a composition bias toward polar residues. A compositionally biased stretch (low complexity) spans 140-152 (FAFGSGLSFGSGF). Basic and acidic residues-rich tracts occupy residues 157–179 (NKTE…KVHS) and 189–205 (EDTK…KQEV). Ser179 carries the post-translational modification Phosphoserine. In terms of domain architecture, RanBD1 spans 191–327 (TKDKPKPLKL…YNIIVKSVPK (137 aa)).

Interacts with GSP1, XPO1 and SRM1.

The protein localises to the nucleus. Its function is as follows. Important for the export of protein containing nuclear export signal (NES) out of the nucleus. Stimulates the GTPase activity of GSP1. The chain is Ran-specific GTPase-activating protein 2 (YRB2) from Saccharomyces cerevisiae (strain ATCC 204508 / S288c) (Baker's yeast).